The sequence spans 1070 residues: DNA-directed RNA polymerase subunit beta (1070 aa).

This sequence belongs to the RNA polymerase beta chain family. In terms of assembly, in plastids the minimal PEP RNA polymerase catalytic core is composed of four subunits: alpha, beta, beta', and beta''. When a (nuclear-encoded) sigma factor is associated with the core the holoenzyme is formed, which can initiate transcription.

It is found in the plastid. The enzyme catalyses RNA(n) + a ribonucleoside 5'-triphosphate = RNA(n+1) + diphosphate. DNA-dependent RNA polymerase catalyzes the transcription of DNA into RNA using the four ribonucleoside triphosphates as substrates. This Cuscuta reflexa (Southern Asian dodder) protein is DNA-directed RNA polymerase subunit beta (rpoB).